The chain runs to 264 residues: 3-methyl-2-oxobutanoate hydroxymethyltransferase (264 aa).

Residues Asp45 and Asp84 each coordinate Mg(2+). 3-methyl-2-oxobutanoate is bound by residues 45 to 46 (DS), Asp84, and Lys112. A Mg(2+)-binding site is contributed by Glu114. Residue Glu181 is the Proton acceptor of the active site.

The protein belongs to the PanB family. Homodecamer; pentamer of dimers. Requires Mg(2+) as cofactor.

The protein localises to the cytoplasm. It catalyses the reaction 3-methyl-2-oxobutanoate + (6R)-5,10-methylene-5,6,7,8-tetrahydrofolate + H2O = 2-dehydropantoate + (6S)-5,6,7,8-tetrahydrofolate. It functions in the pathway cofactor biosynthesis; (R)-pantothenate biosynthesis; (R)-pantoate from 3-methyl-2-oxobutanoate: step 1/2. Its function is as follows. Catalyzes the reversible reaction in which hydroxymethyl group from 5,10-methylenetetrahydrofolate is transferred onto alpha-ketoisovalerate to form ketopantoate. The chain is 3-methyl-2-oxobutanoate hydroxymethyltransferase from Psychromonas ingrahamii (strain DSM 17664 / CCUG 51855 / 37).